The following is a 218-amino-acid chain: Probable nicotinate-nucleotide adenylyltransferase (218 aa).

It belongs to the NadD family.

It carries out the reaction nicotinate beta-D-ribonucleotide + ATP + H(+) = deamido-NAD(+) + diphosphate. It participates in cofactor biosynthesis; NAD(+) biosynthesis; deamido-NAD(+) from nicotinate D-ribonucleotide: step 1/1. In terms of biological role, catalyzes the reversible adenylation of nicotinate mononucleotide (NaMN) to nicotinic acid adenine dinucleotide (NaAD). The polypeptide is Probable nicotinate-nucleotide adenylyltransferase (Burkholderia cenocepacia (strain ATCC BAA-245 / DSM 16553 / LMG 16656 / NCTC 13227 / J2315 / CF5610) (Burkholderia cepacia (strain J2315))).